Reading from the N-terminus, the 72-residue chain is Putative beta-neurotoxin (72 aa).

An N-terminal signal peptide occupies residues 1–7; sequence IDMVVEC. Residues 9–71 enclose the LCN-type CS-alpha/beta domain; the sequence is KDGYLMEHDG…TWSRATNRCG (63 aa). Intrachain disulfides connect C19–C70, C23–C45, C31–C51, and C35–C53.

As to expression, expressed by the venom gland.

It is found in the secreted. In terms of biological role, beta toxins bind voltage-independently at site-4 of sodium channels (Nav) and shift the voltage of activation toward more negative potentials thereby affecting sodium channel activation and promoting spontaneous and repetitive firing. This chain is Putative beta-neurotoxin, found in Tityus pachyurus (Colombian scorpion).